Here is a 296-residue protein sequence, read N- to C-terminus: Glycine N-acyltransferase (296 aa).

Position 16 is an N6-acetyllysine; alternate (Lys-16). N6-succinyllysine; alternate is present on Lys-16. At Lys-113 the chain carries N6-acetyllysine. An N6-acetyllysine; alternate mark is found at Lys-127, Lys-141, and Lys-142. 3 positions are modified to N6-succinyllysine; alternate: Lys-127, Lys-141, and Lys-142. 2 positions are modified to N6-acetyllysine: Lys-159 and Lys-167. Lys-169 carries the N6-succinyllysine modification. N6-acetyllysine; alternate occurs at positions 183 and 256. N6-succinyllysine; alternate is present on residues Lys-183 and Lys-256. Lys-267 carries the N6-succinyllysine modification.

The protein belongs to the glycine N-acyltransferase family.

The protein resides in the mitochondrion. The enzyme catalyses an acyl-CoA + glycine = an N-acylglycine + CoA + H(+). It catalyses the reaction benzoyl-CoA + glycine = N-benzoylglycine + CoA + H(+). Its function is as follows. Mitochondrial acyltransferase which transfers an acyl group to the N-terminus of glycine and glutamine, although much less efficiently. Can conjugate a multitude of substrates to form a variety of N-acylglycines, thereby detoxify xenobiotics, such as benzoic acid or salicylic acid, and endogenous organic acids, such as isovaleric acid. The polypeptide is Glycine N-acyltransferase (Glyat) (Mus musculus (Mouse)).